The following is a 184-amino-acid chain: Alpha-tubulin N-acetyltransferase (184 aa).

The N-acetyltransferase domain maps to 1 to 174 (MDTHGEKMKN…NNFVIFAEYF (174 aa)). Acetyl-CoA contacts are provided by residues 108–121 (FYIRRDFRKRGLGL) and 144–153 (SHKLRSFLKK).

The protein belongs to the acetyltransferase ATAT1 family.

The enzyme catalyses L-lysyl-[alpha-tubulin] + acetyl-CoA = N(6)-acetyl-L-lysyl-[alpha-tubulin] + CoA + H(+). In terms of biological role, specifically acetylates 'Lys-40' in alpha-tubulin on the lumenal side of microtubules. Promotes microtubule destabilization and accelerates microtubule dynamics; this activity may be independent of acetylation activity. Acetylates alpha-tubulin with a slow enzymatic rate, due to a catalytic site that is not optimized for acetyl transfer. Enters the microtubule through each end and diffuses quickly throughout the lumen of microtubules. Acetylates only long/old microtubules because of its slow acetylation rate since it does not have time to act on dynamically unstable microtubules before the enzyme is released. This Plasmodium vivax (strain Salvador I) protein is Alpha-tubulin N-acetyltransferase.